We begin with the raw amino-acid sequence, 421 residues long: Vasopressin V1b receptor (421 aa).

The Extracellular portion of the chain corresponds to 1–35; it reads MDSEPSWTATPSPGGTLFVPNTTTPWLGRDEELAK. An N-linked (GlcNAc...) asparagine glycan is attached at asparagine 21. Residues 36-59 form a helical membrane-spanning segment; that stretch reads VEIGILATVLVLATGGNLAVLLIL. Over 60–71 the chain is Cytoplasmic; sequence GLQGHKRSRMHL. The helical transmembrane segment at 72 to 93 threads the bilayer; that stretch reads FVLHLALTDLGVALFQVLPQLL. Residues 94–108 lie on the Extracellular side of the membrane; the sequence is WDITYRFQGSDLLCR. Cysteine 107 and cysteine 186 are joined by a disulfide. The helical transmembrane segment at 109–130 threads the bilayer; it reads AVKYLQVLSMFASTYMLLAMTL. The Cytoplasmic portion of the chain corresponds to 131-151; that stretch reads DRYLAVCHPLRSLQQPSQSTY. Residues 152–173 traverse the membrane as a helical segment; that stretch reads PLIAAPWLLAAILSLPQVFIFS. The Extracellular portion of the chain corresponds to 174-202; the sequence is LREVIQGSGVLDCWADFYFSWGPRAYITW. The chain crosses the membrane as a helical span at residues 203–223; it reads TTMAIFVLPVVVLTACYGLIC. The Cytoplasmic segment spans residues 224–280; that stretch reads HEIYKNLKVKTQAGREERRGWPKSSSSAAAAATRGLPSRVSSISTISRAKIRTVKMT. The helical transmembrane segment at 281 to 300 threads the bilayer; the sequence is FVIVLAYIACWAPFFSVQMW. Residues 301–318 are Extracellular-facing; it reads SVWDENAPNEDSTNVAFT. A helical membrane pass occupies residues 319–338; sequence ISMLLGNLSSCCNPWIYMGF. At 339 to 421 the chain is on the cytoplasmic side; it reads NSHLLPRSLS…GEATMETSIS (83 aa). The segment at 399-421 is disordered; it reads KPAGSLKDLEQVDGEATMETSIS.

It belongs to the G-protein coupled receptor 1 family. Vasopressin/oxytocin receptor subfamily.

The protein localises to the cell membrane. Receptor for arginine vasopressin. The activity of this receptor is mediated by G proteins which activate a phosphatidyl-inositol-calcium second messenger system. The sequence is that of Vasopressin V1b receptor (Avpr1b) from Mus musculus (Mouse).